The chain runs to 383 residues: MDGIDRNPRQKLSLLLVAGRHHLSSRDLRELVEFLQNEDCGFDVSLQISDPTQQPELLELHRLVVTPSLVKLQPQPKQVFAGSSIFQQLRGWLPRWQQDEVVSGLGLSLKPTELDGSRTQRELQLEDQLLVLRQENETLIDRLQAQERLLRMVAHELRTPLTAATLAVQSQELGQIDIHRFRDVLKRRLEEIALLSKDLLEVGSTRWEALFNPQRLDLTSVAAEAILELEKLWLGRDVTIHTDIPADLPKVFADQRRMRQVLLNLLENALKYTPNGGLISLTMLHRTSQWVQVSISDSGPGIPEEEQQRIFLDRVRLPQTSAGASGFGVGLSVCRRIVEVHGGRIWVISEPEKGACFTFNVPIWQGQGQEKENVVLTEGQAEP.

The Histidine kinase domain occupies 152–365 (MVAHELRTPL…CFTFNVPIWQ (214 aa)). His-155 carries the phosphohistidine; by autocatalysis modification.

As to quaternary structure, homooligomerizes. Interacts with KaiC. Participates in the KaiABC clock complex, whose core is composed of a KaiC homohexamer, 6 KaiB and up to 6 KaiA dimers. SasA and KaiB(fs) compete to bind to KaiC.

The enzyme catalyses ATP + protein L-histidine = ADP + protein N-phospho-L-histidine.. Its function is as follows. Member of the two-component regulatory system SasA/RpaA involved in genome-wide circadian gene expression. One of several clock output pathways. Participates in the Kai clock protein complex, the main circadian regulator in cyanobacteria, via its interaction with KaiC. KaiC enhances the autophosphorylation activity of SasA, which then transfers its phosphate group to RpaA to activate it. In addition to its output function, recruits fold-shifted KaiB (KaiB(fs)) to KaiC to cooperatively form the KaiB(6):KaiC(6) complex (independent of SasA kinase activity). Required for robustness of the circadian rhythm of gene expression and is involved in clock output, also required for adaptation to light/dark cycles. This is Adaptive-response sensory kinase SasA from Synechococcus sp. (strain CC9311).